We begin with the raw amino-acid sequence, 177 residues long: Bifunctional protein PyrR (177 aa).

Positions 99 to 111 match the PRPP-binding motif; it reads VILIDDVLYTGRT.

It belongs to the purine/pyrimidine phosphoribosyltransferase family. PyrR subfamily. As to quaternary structure, homodimer and homohexamer; in equilibrium.

It carries out the reaction UMP + diphosphate = 5-phospho-alpha-D-ribose 1-diphosphate + uracil. Its function is as follows. Regulates transcriptional attenuation of the pyrimidine nucleotide (pyr) operon by binding in a uridine-dependent manner to specific sites on pyr mRNA. This disrupts an antiterminator hairpin in the RNA and favors formation of a downstream transcription terminator, leading to a reduced expression of downstream genes. In terms of biological role, also displays a weak uracil phosphoribosyltransferase activity which is not physiologically significant. In Pediococcus pentosaceus (strain ATCC 25745 / CCUG 21536 / LMG 10740 / 183-1w), this protein is Bifunctional protein PyrR.